Consider the following 190-residue polypeptide: UPF0398 protein LAR_0869 (190 aa).

This sequence belongs to the UPF0398 family.

The chain is UPF0398 protein LAR_0869 from Limosilactobacillus reuteri subsp. reuteri (strain JCM 1112) (Lactobacillus reuteri).